Reading from the N-terminus, the 777-residue chain is Ethylene receptor 4 (777 aa).

The next 3 helical transmembrane spans lie at 49 to 69, 77 to 97, and 113 to 133; these read LLIA…ATCA, AVLH…LAAF, and AAKV…LTFI. Cu cation is bound by residues C88 and H92. The 161-residue stretch at 184 to 344 folds into the GAF domain; sequence DAHAILRTTA…VVADQAAVAL (161 aa). One can recognise a Histidine kinase domain in the interval 387–521; the sequence is AMCHAMRRPV…NTESGACRLS (135 aa). H390 carries the post-translational modification Phosphohistidine; by autocatalysis. A Response regulatory domain is found at 645–774; it reads RVLLADDDAM…ALGAQLCRVL (130 aa). Residue D696 is modified to 4-aspartylphosphate.

The protein belongs to the ethylene receptor family. It depends on Cu cation as a cofactor.

The protein resides in the endoplasmic reticulum membrane. It catalyses the reaction ATP + protein L-histidine = ADP + protein N-phospho-L-histidine.. Its function is as follows. Ethylene receptor related to bacterial two-component regulators. Acts as a redundant negative regulator of ethylene signaling. In Oryza sativa subsp. indica (Rice), this protein is Ethylene receptor 4.